The chain runs to 717 residues: Ubinuclein-2 (717 aa).

3 disordered regions span residues Lys114–Ser136, Leu166–Ser308, and Ala620–Ser717. Positions Asp118 to Ser136 are enriched in acidic residues. Composition is skewed to polar residues over residues Gln214–Asp246 and Ser285–Ser308. Residues Ser623–Glu632 are compositionally biased toward basic and acidic residues. The Nuclear localization signal signature appears at Leu634–Ser641. The span at Lys653–Ala665 shows a compositional bias: basic and acidic residues. The span at Arg675–Ala705 shows a compositional bias: basic residues. The span at Lys706–Ser717 shows a compositional bias: polar residues.

This sequence belongs to the ubinuclein family. In terms of assembly, component of the HIRA complex made of UBN1, UBN2, ASF1A, CABIN1 and HIRA. Interacts with HIRA.

It is found in the nucleus. Its subcellular location is the nucleolus. In terms of biological role, may be required for replication-independent chromatin assembly. This Arabidopsis thaliana (Mouse-ear cress) protein is Ubinuclein-2.